The following is a 109-amino-acid chain: Putative double-stranded DNA mimic protein YciU (109 aa).

This sequence belongs to the putative dsDNA mimic protein family.

Functionally, may act as a double-stranded DNA (dsDNA) mimic. Probably regulates the activity of a dsDNA-binding protein. The polypeptide is Putative double-stranded DNA mimic protein YciU (Shigella flexneri).